The chain runs to 229 residues: Potassium/proton antiporter CemA (229 aa).

The next 3 helical transmembrane spans lie at 6-26, 107-127, and 189-209; these read AFIPFFYFTSIVFLPWLISLC, ILHFSTNLISFVILSGYSFWG, and ILSGLVSTFPVILDTIFKYWI.

The protein belongs to the CemA family.

The protein resides in the plastid. It localises to the chloroplast inner membrane. It carries out the reaction K(+)(in) + H(+)(out) = K(+)(out) + H(+)(in). Its function is as follows. Contributes to K(+)/H(+) antiport activity by supporting proton efflux to control proton extrusion and homeostasis in chloroplasts in a light-dependent manner to modulate photosynthesis. Prevents excessive induction of non-photochemical quenching (NPQ) under continuous-light conditions. Indirectly promotes efficient inorganic carbon uptake into chloroplasts. This Barbarea verna (Land cress) protein is Potassium/proton antiporter CemA.